We begin with the raw amino-acid sequence, 157 residues long: Anaerobic nitrite reductase Hb1 (157 aa).

Positions 5–154 constitute a Globin domain; the sequence is GFTEEQEALV…LAEAIKSEMK (150 aa). The Homodimerization motif lies at 38-42; that stretch reads EIAPA. Residues Ser48, Lys62, His66, Arg96, Thr100, and His101 each coordinate heme b. A Homodimerization motif is present at residues 108 to 120; it reads AEHFEVTKLALLE.

The protein belongs to the plant globin family. As to quaternary structure, homodimer. Heme b is required as a cofactor. In terms of tissue distribution, predominantly expressed in leaves, to a lower extent in roots, and barely in stems, flowers and seeds.

It is found in the cytoplasm. The protein resides in the nucleus. The catalysed reaction is Fe(III)-heme b-[protein] + nitric oxide + H2O = Fe(II)-heme b-[protein] + nitrite + 2 H(+). Phytoglobin that reduces nitrite to nitric oxide (NO) under anoxic conditions (e.g. during flooding or in waterlogged soil) and upon root nodulation. Required for general plant development and during nodulation, especially for the onset of symbiosis. Monitors nitric oxide (NO) levels during early phase of the nitrogen-fixing symbiosis and buffers oxygen in functioning nodules. May not function as an oxygen storage or transport protein. Has an unusually high affinity for O(2) through a hexacoordinate heme iron because of a very low dissociation constant. Involved in water stress tolerance. The chain is Anaerobic nitrite reductase Hb1 from Glycine max (Soybean).